The primary structure comprises 953 residues: Translation initiation factor IF-2 (953 aa).

Disordered regions lie at residues 48 to 212 (SSFS…KIDF) and 279 to 367 (TKLK…FHEL). 3 stretches are compositionally biased toward basic and acidic residues: residues 80–89 (TGSEHVEKTQ), 98–111 (FKAE…EQAA), and 140–188 (QGDK…ENHK). Polar residues-rich tracts occupy residues 191-207 (RFTN…QSKS) and 282-291 (KSSNISAKST). Basic and acidic residues predominate over residues 300–317 (ARPEKNRELTHHSQEGQK). Positions 322–338 (SWNSQNQVRNQKNSNWN) are enriched in low complexity. Residues 339 to 348 (KNKKTKKGKN) are compositionally biased toward basic residues. One can recognise a tr-type G domain in the interval 454–623 (ERAPVVTIMG…LLVAEVEELK (170 aa)). The G1 stretch occupies residues 463-470 (GHVDHGKT). Position 463-470 (463-470 (GHVDHGKT)) interacts with GTP. The tract at residues 488–492 (GITQH) is G2. A G3 region spans residues 509–512 (DTPG). GTP is bound by residues 509–513 (DTPGH) and 563–566 (NKID). Positions 563 to 566 (NKID) are G4. A G5 region spans residues 599–601 (SAK).

The protein belongs to the TRAFAC class translation factor GTPase superfamily. Classic translation factor GTPase family. IF-2 subfamily.

The protein localises to the cytoplasm. Functionally, one of the essential components for the initiation of protein synthesis. Protects formylmethionyl-tRNA from spontaneous hydrolysis and promotes its binding to the 30S ribosomal subunits. Also involved in the hydrolysis of GTP during the formation of the 70S ribosomal complex. The polypeptide is Translation initiation factor IF-2 (Streptococcus pyogenes serotype M3 (strain ATCC BAA-595 / MGAS315)).